The chain runs to 121 residues: MNSSYFPGVLGVRWVHTNRKLQKRKEEHGAFQDSLHFMIPAAETKDLGASVTVGNSLTRAFRQVDRICQRNNVPRLFRSQRFYEKPSEKRSRVRSERHRARFRAGIVRLVNLAKNMRRWGY.

The transit peptide at 1–14 directs the protein to the mitochondrion; that stretch reads MNSSYFPGVLGVRW.

The protein belongs to the bacterial ribosomal protein bS21 family. Component of the mitochondrial small ribosomal subunit (mt-SSU). Mature yeast 74S mitochondrial ribosomes consist of a small (37S) and a large (54S) subunit. The 37S small subunit contains a 15S ribosomal RNA (15S mt-rRNA) and at least 32 different proteins. The 54S large subunit contains a 21S rRNA (21S mt-rRNA) and at least 45 different proteins.

It is found in the mitochondrion. Functionally, component of the mitochondrial ribosome (mitoribosome), a dedicated translation machinery responsible for the synthesis of mitochondrial genome-encoded proteins, including at least some of the essential transmembrane subunits of the mitochondrial respiratory chain. The mitoribosomes are attached to the mitochondrial inner membrane and translation products are cotranslationally integrated into the membrane. The chain is Small ribosomal subunit protein bS21m (mrp21) from Schizosaccharomyces pombe (strain 972 / ATCC 24843) (Fission yeast).